The primary structure comprises 347 residues: MSVMFDPDTAIYPFPPKPTPLSIDEKAYYREKIKRLLKERNAVMVAHYYTDPEIQQLAEETGGCISDSLEMARFGAKHPASTLLVAGVRFMGETAKILSPEKTILMPTLQAECSLDLGCPVEEFNAFCDAHPDRTVVVYANTSAAVKARADWVVTSSIAVELIDHLDSLGEKIIWAPDKHLGRYVQKKTGADILCWQGACIVHDEFKTQALTRLQEEYPDAAILVHPESPQAIVDMADAVGSTSQLIAAAKTLPHQRLIVATDRGIFYKMQQAVPDKELLEAPTAGEGATCRSCAHCPWMAMNGLQAIAEALEQEGSNYEVHVDERLRERALVPLNRMLDFAATLRG.

Residues His47 and Ser68 each contribute to the iminosuccinate site. Cys113 serves as a coordination point for [4Fe-4S] cluster. Iminosuccinate is bound by residues 139–141 and Ser156; that span reads YAN. Cys200 is a [4Fe-4S] cluster binding site. Iminosuccinate-binding positions include 226-228 and Thr243; that span reads HPE. Cys297 is a [4Fe-4S] cluster binding site.

It belongs to the quinolinate synthase family. Type 1 subfamily. Requires [4Fe-4S] cluster as cofactor.

Its subcellular location is the cytoplasm. The catalysed reaction is iminosuccinate + dihydroxyacetone phosphate = quinolinate + phosphate + 2 H2O + H(+). It functions in the pathway cofactor biosynthesis; NAD(+) biosynthesis; quinolinate from iminoaspartate: step 1/1. Its function is as follows. Catalyzes the condensation of iminoaspartate with dihydroxyacetone phosphate to form quinolinate. The polypeptide is Quinolinate synthase (Escherichia coli O157:H7).